The chain runs to 458 residues: UDP-N-acetylmuramoylalanine--D-glutamate ligase (458 aa).

124–130 (GSDGKTT) serves as a coordination point for ATP.

It belongs to the MurCDEF family.

Its subcellular location is the cytoplasm. It catalyses the reaction UDP-N-acetyl-alpha-D-muramoyl-L-alanine + D-glutamate + ATP = UDP-N-acetyl-alpha-D-muramoyl-L-alanyl-D-glutamate + ADP + phosphate + H(+). Its pathway is cell wall biogenesis; peptidoglycan biosynthesis. In terms of biological role, cell wall formation. Catalyzes the addition of glutamate to the nucleotide precursor UDP-N-acetylmuramoyl-L-alanine (UMA). This Clostridium botulinum (strain Kyoto / Type A2) protein is UDP-N-acetylmuramoylalanine--D-glutamate ligase.